We begin with the raw amino-acid sequence, 476 residues long: Sulfate adenylyltransferase subunit 1 (476 aa).

One can recognise a tr-type G domain in the interval Lys-24–Glu-239. The tract at residues Gly-33–Ser-40 is G1. Position 33–40 (Gly-33–Ser-40) interacts with GTP. Positions Gly-91–Asp-95 are G2. The tract at residues Asp-112–Gly-115 is G3. Residues Asp-112–His-116 and Asn-167–Asp-170 contribute to the GTP site. The G4 stretch occupies residues Asn-167–Asp-170. The G5 stretch occupies residues Ser-205–Leu-207.

It belongs to the TRAFAC class translation factor GTPase superfamily. Classic translation factor GTPase family. CysN/NodQ subfamily. As to quaternary structure, heterodimer composed of CysD, the smaller subunit, and CysN.

It catalyses the reaction sulfate + ATP + H(+) = adenosine 5'-phosphosulfate + diphosphate. The protein operates within sulfur metabolism; hydrogen sulfide biosynthesis; sulfite from sulfate: step 1/3. Its function is as follows. With CysD forms the ATP sulfurylase (ATPS) that catalyzes the adenylation of sulfate producing adenosine 5'-phosphosulfate (APS) and diphosphate, the first enzymatic step in sulfur assimilation pathway. APS synthesis involves the formation of a high-energy phosphoric-sulfuric acid anhydride bond driven by GTP hydrolysis by CysN coupled to ATP hydrolysis by CysD. The sequence is that of Sulfate adenylyltransferase subunit 1 from Vibrio campbellii (strain ATCC BAA-1116).